The following is a 142-amino-acid chain: Large ribosomal subunit protein uL11 (142 aa).

Belongs to the universal ribosomal protein uL11 family. Part of the ribosomal stalk of the 50S ribosomal subunit. Interacts with L10 and the large rRNA to form the base of the stalk. L10 forms an elongated spine to which L12 dimers bind in a sequential fashion forming a multimeric L10(L12)X complex. Post-translationally, one or more lysine residues are methylated.

Its function is as follows. Forms part of the ribosomal stalk which helps the ribosome interact with GTP-bound translation factors. The sequence is that of Large ribosomal subunit protein uL11 from Desulfitobacterium hafniense (strain DSM 10664 / DCB-2).